Consider the following 289-residue polypeptide: Splicing factor C9orf78 homolog (289 aa).

Basic residues predominate over residues 1-12 (MPVVRKIFRRRR). Disordered regions lie at residues 1–27 (MPVVRKIFRRRRGDSESEEDEQDSEEV) and 86–109 (GKDKISEEEDLHLGTSFSAETNRR). The segment at 5–58 (RKIFRRRRGDSESEEDEQDSEEVRLKLEETREVQNLRKRPNGVSAVALLVGEKV) is interaction with SNRNP200. Phosphoserine is present on residues serine 15 and serine 17. Tyrosine 147 is modified (phosphotyrosine). Residues 232–283 (LNAPIRRNKEEPKARPLRVGDTEKPEPERSPPNRKRPANEKATDDYHYEKFK) show a composition bias toward basic and acidic residues. A disordered region spans residues 232 to 289 (LNAPIRRNKEEPKARPLRVGDTEKPEPERSPPNRKRPANEKATDDYHYEKFKKMNRRY). A Phosphothreonine modification is found at threonine 253. At serine 261 the chain carries Phosphoserine.

The protein belongs to the TLS1 family. Component of the spliceosome. Interacts with SNRNP200; the interaction is direct. Interacts with PRPF8.

The protein localises to the nucleus. It is found in the chromosome. The protein resides in the centromere. Functionally, plays a role in pre-mRNA splicing by promoting usage of the upstream 3'-splice site at alternative NAGNAG splice sites; these are sites featuring alternative acceptor motifs separated by only a few nucleotides. May also modulate exon inclusion events. Plays a role in spliceosomal remodeling by displacing WBP4 from SNRNP200 and may act to inhibit SNRNP200 helicase activity. Binds U5 snRNA. Required for proper chromosome segregation. Not required for splicing of shelterin components. This Pongo abelii (Sumatran orangutan) protein is Splicing factor C9orf78 homolog.